Reading from the N-terminus, the 286-residue chain is MSDYQETLYQGYGQRFSIDNMLHEVRTEHQHLVIFENARMGRVMALDGVIQTTEADEFIYHEMLTHVPILAHGAARRVLIIGGGDGGMLREVAKHKSVERITMVEIDGTVVDMCKEFLPNHSQGAFDDPRLNLVIDDGMRFVATTEERFDVIISDSTDPIGPGEVLFSENFYQACRRCLNEGGILVTQNGTPFMQLEEVRTTAARTDGLFADWHFYQAAVPTYIGGAMTFAWGSTHEGLRRLPLETLRQRFRDSGIATRYYNADIHLGAFALPQYVLQAIGKQDND.

The region spanning 1–235 (MSDYQETLYQ…GAMTFAWGST (235 aa)) is the PABS domain. Gln-30 is an S-methyl-5'-thioadenosine binding site. Spermidine is bound by residues His-61 and Asp-85. Residues Glu-105 and 137 to 138 (DG) contribute to the S-methyl-5'-thioadenosine site. Asp-155 acts as the Proton acceptor in catalysis. Position 155-158 (155-158 (DSTD)) interacts with spermidine. Residue Pro-162 participates in S-methyl-5'-thioadenosine binding.

This sequence belongs to the spermidine/spermine synthase family. As to quaternary structure, homodimer or homotetramer.

Its subcellular location is the cytoplasm. The enzyme catalyses S-adenosyl 3-(methylsulfanyl)propylamine + putrescine = S-methyl-5'-thioadenosine + spermidine + H(+). It participates in amine and polyamine biosynthesis; spermidine biosynthesis; spermidine from putrescine: step 1/1. Functionally, catalyzes the irreversible transfer of a propylamine group from the amino donor S-adenosylmethioninamine (decarboxy-AdoMet) to putrescine (1,4-diaminobutane) to yield spermidine. This Pseudomonas aeruginosa (strain ATCC 15692 / DSM 22644 / CIP 104116 / JCM 14847 / LMG 12228 / 1C / PRS 101 / PAO1) protein is Polyamine aminopropyltransferase 1.